Consider the following 54-residue polypeptide: Photoreceptor disk component PRCD (54 aa).

Cysteine 2 carries the S-palmitoyl cysteine lipid modification. Positions 25–54 are disordered; sequence PEPSDVDGAARGSSLDADPQSSGREKEPLK.

The protein belongs to the PRCD family. In terms of assembly, interacts with RHO/rhodopsin; the interaction promotes PRCD stability. In terms of processing, palmitoylated at Cys-2. Palmitoylation is essential for protein stability and trafficking to the photoreceptor outer segment, but does not appear to be essential for membrane localization. Probably palmitoylated by ZDHHC3. Phosphorylated.

The protein localises to the cell projection. Its subcellular location is the cilium. The protein resides in the photoreceptor outer segment. It is found in the membrane. It localises to the endoplasmic reticulum. The protein localises to the golgi apparatus. Involved in vision. The protein is Photoreceptor disk component PRCD of Homo sapiens (Human).